The chain runs to 336 residues: Homeobox-leucine zipper protein HAT14 (336 aa).

Disordered regions lie at residues 53–141 (RSLS…PDSV) and 160–194 (SNKR…KLRL). The span at 64 to 81 (EDEKKKPAPRAKKSDEFR) shows a compositional bias: basic and acidic residues. Over residues 120 to 129 (VEEEEEEEEA) the composition is skewed to acidic residues. Over residues 130–141 (VPSMSVSPPDSV) the composition is skewed to low complexity. A compositionally biased stretch (basic and acidic residues) spans 160 to 173 (SNKRDIDDEVERSA). Positions 187 to 246 (STRKKLRLSKDQSAFLEDSFKEHSTLNPKQKIALAKQLNLRPRQVEVWFQNRRARTKLKQ) form a DNA-binding region, homeobox. Positions 254–275 (LKRCCESLTEENRRLQKEVKEL) are leucine-zipper.

The protein belongs to the HD-ZIP homeobox family. Class II subfamily.

The protein localises to the nucleus. Probable transcription factor. This is Homeobox-leucine zipper protein HAT14 (HAT14) from Arabidopsis thaliana (Mouse-ear cress).